We begin with the raw amino-acid sequence, 639 residues long: Cystathionine gamma-synthase (639 aa).

Lys443 carries the post-translational modification N6-(pyridoxal phosphate)lysine.

Belongs to the trans-sulfuration enzymes family. MET7 subfamily. Pyridoxal 5'-phosphate serves as cofactor.

Its subcellular location is the cytoplasm. It localises to the nucleus. The enzyme catalyses O-succinyl-L-homoserine + L-cysteine = L,L-cystathionine + succinate + H(+). The protein operates within amino-acid biosynthesis; L-methionine biosynthesis via de novo pathway; L-cystathionine from O-succinyl-L-homoserine: step 1/1. Its function is as follows. Catalyzes the formation of L-cystathionine from O-succinyl-L-homoserine (OSHS) and L-cysteine, via a gamma-replacement reaction. In the absence of thiol, catalyzes gamma-elimination to form 2-oxobutanoate, succinate and ammonia. This is Cystathionine gamma-synthase from Saccharomyces cerevisiae (strain ATCC 204508 / S288c) (Baker's yeast).